A 525-amino-acid polypeptide reads, in one-letter code: Phosphoenolpyruvate carboxykinase (ATP) (525 aa).

Substrate-binding residues include arginine 54, tyrosine 190, and lysine 196. ATP is bound by residues lysine 196, histidine 215, and 231 to 239; that span reads GLSGTGKTT. Mn(2+) is bound by residues lysine 196 and histidine 215. Aspartate 252 serves as a coordination point for Mn(2+). 3 residues coordinate ATP: glutamate 280, arginine 316, and threonine 441. A substrate-binding site is contributed by arginine 316.

This sequence belongs to the phosphoenolpyruvate carboxykinase (ATP) family. It depends on Mn(2+) as a cofactor.

The protein localises to the cytoplasm. It catalyses the reaction oxaloacetate + ATP = phosphoenolpyruvate + ADP + CO2. The protein operates within carbohydrate biosynthesis; gluconeogenesis. Involved in the gluconeogenesis. Catalyzes the conversion of oxaloacetate (OAA) to phosphoenolpyruvate (PEP) through direct phosphoryl transfer between the nucleoside triphosphate and OAA. In Nitratiruptor sp. (strain SB155-2), this protein is Phosphoenolpyruvate carboxykinase (ATP).